A 315-amino-acid chain; its full sequence is Homoserine kinase (315 aa).

Position 97-107 (97-107) interacts with ATP; the sequence is PPARGLGSSAT.

It belongs to the GHMP kinase family. Homoserine kinase subfamily.

Its subcellular location is the cytoplasm. The enzyme catalyses L-homoserine + ATP = O-phospho-L-homoserine + ADP + H(+). It functions in the pathway amino-acid biosynthesis; L-threonine biosynthesis; L-threonine from L-aspartate: step 4/5. Functionally, catalyzes the ATP-dependent phosphorylation of L-homoserine to L-homoserine phosphate. This chain is Homoserine kinase, found in Prochlorococcus marinus (strain MIT 9215).